The sequence spans 503 residues: U6 snRNA (guanine-N(2))-methyltransferase THUMPD2 (503 aa).

The region spanning 161 to 266 (CQLEKQIKEE…DIYSVVGIPV (106 aa)) is the THUMP domain.

It belongs to the methyltransferase superfamily. Part of the heterodimeric THUMPD2-TRM112 methyltransferase complex; this complex forms an active tRNA methyltransferase, where TRMT112 acts as an activator of the catalytic subunit THUMPD2. As to expression, expressed in a variety of tissues including brain, colon, gingiva, heart, kidney, liver, lung, placenta, small intestine, spleen and thymus.

The protein localises to the nucleus. It catalyses the reaction guanosine in U6 snRNA + S-adenosyl-L-methionine = N(2)-methylguanosine in U6 snRNA + S-adenosyl-L-homocysteine + H(+). In terms of biological role, catalytic subunit of the THUMPD2-TRM112 methyltransferase complex, that specifically mediates the S-adenosyl-L-methionine-dependent N(2)-methylation of guanosine nucleotides, most probably at position 72 (m2G72), in the U6snRNA of the major spliceosome. This modification in the U6 snRNA affects the constitutive splicing efficiency of introns that have suboptimal splice sites and can impact final mRNA levels. The sequence is that of U6 snRNA (guanine-N(2))-methyltransferase THUMPD2 from Homo sapiens (Human).